Here is a 376-residue protein sequence, read N- to C-terminus: Putative F-box protein At1g30930 (376 aa).

The F-box domain maps to 1–44; sequence MKNSIPIDLIIEIVSRSTAKSVARCHCVSKQWRAIFRRKYFIEL.

This Arabidopsis thaliana (Mouse-ear cress) protein is Putative F-box protein At1g30930.